Reading from the N-terminus, the 253-residue chain is Ubiquinone/menaquinone biosynthesis C-methyltransferase UbiE (253 aa).

S-adenosyl-L-methionine is bound by residues T76, D97, and 125–126 (NA).

It belongs to the class I-like SAM-binding methyltransferase superfamily. MenG/UbiE family.

It carries out the reaction a 2-demethylmenaquinol + S-adenosyl-L-methionine = a menaquinol + S-adenosyl-L-homocysteine + H(+). The catalysed reaction is a 2-methoxy-6-(all-trans-polyprenyl)benzene-1,4-diol + S-adenosyl-L-methionine = a 5-methoxy-2-methyl-3-(all-trans-polyprenyl)benzene-1,4-diol + S-adenosyl-L-homocysteine + H(+). It participates in quinol/quinone metabolism; menaquinone biosynthesis; menaquinol from 1,4-dihydroxy-2-naphthoate: step 2/2. The protein operates within cofactor biosynthesis; ubiquinone biosynthesis. Functionally, methyltransferase required for the conversion of demethylmenaquinol (DMKH2) to menaquinol (MKH2) and the conversion of 2-polyprenyl-6-methoxy-1,4-benzoquinol (DDMQH2) to 2-polyprenyl-3-methyl-6-methoxy-1,4-benzoquinol (DMQH2). This is Ubiquinone/menaquinone biosynthesis C-methyltransferase UbiE from Stenotrophomonas maltophilia (strain K279a).